The following is a 298-amino-acid chain: Short-chain dehydrogenase reductase 4 (298 aa).

Residue 50-74 (IITGGASGIGAEAVRLFTDHGAKVV) coordinates NAD(+). Ser182 serves as a coordination point for substrate. Tyr195 serves as the catalytic Proton acceptor.

Belongs to the short-chain dehydrogenases/reductases (SDR) family.

The protein is Short-chain dehydrogenase reductase 4 (SDR4) of Arabidopsis thaliana (Mouse-ear cress).